Reading from the N-terminus, the 294-residue chain is Proteasome subunit beta 1 (294 aa).

Positions 1 to 65 are cleaved as a propeptide — removed in mature form; by autocatalysis; that stretch reads MTADRPALRT…MESGDLAPHG (65 aa). The active-site Nucleophile is threonine 66.

The protein belongs to the peptidase T1B family. As to quaternary structure, the 20S proteasome core is composed of 14 alpha and 14 beta subunits that assemble into four stacked heptameric rings, resulting in a barrel-shaped structure. The two inner rings, each composed of seven catalytic beta subunits, are sandwiched by two outer rings, each composed of seven alpha subunits. All four combinations of alpha- and beta-subunits (beta2-alpha1, beta2-alpha2, beta1-alpha2 and beta1-alpha1) yield fully assembled and proteolytically active proteasomes. The catalytic chamber with the active sites is on the inside of the barrel. Has probably a gated structure, the ends of the cylinder being occluded by the N-termini of the alpha-subunits. Is likely capped by the proteasome-associated ATPase, ARC.

It localises to the cytoplasm. The enzyme catalyses Cleavage of peptide bonds with very broad specificity.. It participates in protein degradation; proteasomal Pup-dependent pathway. With respect to regulation, the formation of the proteasomal ATPase ARC-20S proteasome complex, likely via the docking of the C-termini of ARC into the intersubunit pockets in the alpha-rings, may trigger opening of the gate for substrate entry. Interconversion between the open-gate and close-gate conformations leads to a dynamic regulation of the 20S proteasome proteolysis activity. Its function is as follows. Component of the proteasome core, a large protease complex with broad specificity involved in protein degradation. The R.erythropolis proteasomes are able to cleave oligopeptides after Tyr, Phe and Leu, very poorly after Arg but not after Glu. Thus, displays chymotrypsin-like activity, low trypsin-like activity but no caspase-like activity. The sequence is that of Proteasome subunit beta 1 from Rhodococcus erythropolis (Arthrobacter picolinophilus).